The primary structure comprises 244 residues: Uridylate kinase (244 aa).

Residue 17-20 (KVSG) coordinates ATP. An involved in allosteric activation by GTP region spans residues 25–30 (GEKGFG). Gly59 contributes to the UMP binding site. Residues Gly60 and Arg64 each coordinate ATP. UMP is bound by residues Asp80 and 141 to 148 (VGNPFFTT). Thr168, Gln169, Tyr174, and Asp177 together coordinate ATP.

Belongs to the UMP kinase family. Homohexamer.

Its subcellular location is the cytoplasm. The enzyme catalyses UMP + ATP = UDP + ADP. Its pathway is pyrimidine metabolism; CTP biosynthesis via de novo pathway; UDP from UMP (UMPK route): step 1/1. With respect to regulation, allosterically activated by GTP. Inhibited by UTP. In terms of biological role, catalyzes the reversible phosphorylation of UMP to UDP. This chain is Uridylate kinase, found in Ehrlichia canis (strain Jake).